Consider the following 282-residue polypeptide: Secretory carrier-associated membrane protein 3 (282 aa).

A disordered region spans residues 1-36; that stretch reads MAGKHGRNGFEDDDVNPFAGGSVPPANNSRLPPLSH. The Cytoplasmic segment spans residues 1-117; that stretch reads MAGKHGRNGF…EIPIHLQRMQ (117 aa). The stretch at 48-92 forms a coiled coil; the sequence is LDSSKDLKKKEKELQAMEAELNKRERELKRKEEAAAQAGIVIEDK. The next 4 membrane-spanning stretches (helical) occupy residues 118-138, 148-168, 185-205, and 230-250; these read YLAFSSFLGLAACLFWNIIAT, VIIWLLAIIYFISGVPGAYVL, FGWFFLFYLIHIIFCVWAAVA, and IVGIFYFVGFGLFCLESLLSI. Residues 251-282 lie on the Cytoplasmic side of the membrane; the sequence is GVIQQVYMYFRGSGKAAEMKREAARGALSSAF.

It belongs to the SCAMP family.

The protein localises to the cell membrane. The protein resides in the cytoplasmic vesicle. It localises to the secretory vesicle membrane. In terms of biological role, probably involved in membrane trafficking. This Oryza sativa subsp. japonica (Rice) protein is Secretory carrier-associated membrane protein 3 (SCAMP3).